We begin with the raw amino-acid sequence, 494 residues long: Solute carrier family 2, facilitated glucose transporter member 3 (494 aa).

At 1-10 (MGTTKVTPYL) the chain is on the cytoplasmic side. Residues 11 to 32 (IFATSVAAIGSFQFGYNTGVIN) form a helical membrane-spanning segment. Residues 33–64 (APEMIIRDFLNYTLDEKLDEPPSRLLLTNLWS) are Extracellular-facing. Asn-43 is a glycosylation site (N-linked (GlcNAc...) asparagine). Residues 65-84 (LSVAIFSVGGMIGSFSVGLF) form a helical membrane-spanning segment. Topologically, residues 85–89 (NRFGR) are cytoplasmic. A helical transmembrane segment spans residues 90–110 (RNSMLIVNLLAVIGGCLMGFC). Topologically, residues 111–117 (KISESVE) are extracellular. The helical transmembrane segment at 118–141 (MLILGRLVIGVFCGLCTGFVPMYI) threads the bilayer. At 142–152 (GEISPTALRGA) the chain is on the cytoplasmic side. A helical membrane pass occupies residues 153–173 (FGTLNQLGIVIGILVAQIFGL). A D-glucose-binding site is contributed by Gln-158. The Extracellular portion of the chain corresponds to 174–182 (EIILGSEVL). A helical transmembrane segment spans residues 183–203 (WPVLLGFTIIPAILQSAALPF). At 204–268 (CPESPRFLLI…LFRAPSYRQP (65 aa)) the chain is on the cytoplasmic side. Phosphothreonine is present on Thr-231. A helical membrane pass occupies residues 269-289 (IIISIVLQLSQQLSGINAVFY). Residues 276-278 (QLS) form an important for selectivity against fructose region. Residues 279-280 (QQ) and Asn-285 each bind D-glucose. Residues 290–303 (YSTGIFKDAGVKEP) lie on the Extracellular side of the membrane. A helical transmembrane segment spans residues 304-324 (IYATIGAGVVNTIFTIVSVFL). Asn-314 is a D-glucose binding site. Residues 325–330 (VERAGR) lie on the Cytoplasmic side of the membrane. Residues 331-351 (RTLHLIGLGGMALCSVLMTVS) form a helical membrane-spanning segment. The Extracellular portion of the chain corresponds to 352 to 362 (LLLKDKYDTMS). A helical transmembrane segment spans residues 363-388 (LVCIAAILIYVAFFEIGPGPIPWFIV). The D-glucose site is built by Glu-377 and Trp-385. At 389–398 (AELFSQGPRP) the chain is on the cytoplasmic side. The chain crosses the membrane as a helical span at residues 399–419 (AAMAVAGCSNWTSNFLVGLLF). Residues 420–428 (PSAAYYLGA) lie on the Extracellular side of the membrane. A helical transmembrane segment spans residues 429-449 (YVFVIFAVFLVAFFIFTFFKV). Residues 450–494 (PETRGRTFEDITRAFEGQAAEANKLGKGPTMEMNSIQPIETTTHV) are Cytoplasmic-facing. Ser-484 carries the phosphoserine modification. Phosphothreonine is present on Thr-491.

It belongs to the major facilitator superfamily. Sugar transporter (TC 2.A.1.1) family. Glucose transporter subfamily. Interacts with SMIM43; the interaction may promote SLC2A3-mediated glucose transport to meet the energy needs of mesendoderm differentiation. As to expression, detected in stomach, placenta, lung and brain.

The protein localises to the cell membrane. The protein resides in the perikaryon. Its subcellular location is the cell projection. The catalysed reaction is D-glucose(out) = D-glucose(in). It catalyses the reaction D-galactose(in) = D-galactose(out). Its activity is regulated as follows. Deoxyglucose transport is inhibited by D-glucose, D-galactose and maltose. Galactose transport is inhibited by D-glucose and maltose. In terms of biological role, facilitative glucose transporter. Can also mediate the uptake of various other monosaccharides across the cell membrane. Mediates the uptake of glucose, 2-deoxyglucose, galactose, mannose, xylose and fucose, and probably also dehydroascorbate. Does not mediate fructose transport. Required for mesendoderm differentiation. The polypeptide is Solute carrier family 2, facilitated glucose transporter member 3 (Oryctolagus cuniculus (Rabbit)).